The chain runs to 169 residues: S-ribosylhomocysteine lyase (169 aa).

Positions 54, 58, and 128 each coordinate Fe cation.

It belongs to the LuxS family. Homodimer. Fe cation serves as cofactor.

It catalyses the reaction S-(5-deoxy-D-ribos-5-yl)-L-homocysteine = (S)-4,5-dihydroxypentane-2,3-dione + L-homocysteine. Its function is as follows. Involved in the synthesis of autoinducer 2 (AI-2) which is secreted by bacteria and is used to communicate both the cell density and the metabolic potential of the environment. The regulation of gene expression in response to changes in cell density is called quorum sensing. Catalyzes the transformation of S-ribosylhomocysteine (RHC) to homocysteine (HC) and 4,5-dihydroxy-2,3-pentadione (DPD). The protein is S-ribosylhomocysteine lyase of Shewanella woodyi (strain ATCC 51908 / MS32).